Here is a 127-residue protein sequence, read N- to C-terminus: Fluoride-specific ion channel FluC 1 (127 aa).

Transmembrane regions (helical) follow at residues 4–24, 35–55, 71–91, and 101–121; these read TLLA…LVSL, VGTL…LALF, TGFC…VYLI, and GTIL…FILV. 2 residues coordinate Na(+): Gly75 and Thr78.

The protein belongs to the fluoride channel Fluc/FEX (TC 1.A.43) family.

It is found in the cell inner membrane. The enzyme catalyses fluoride(in) = fluoride(out). Its activity is regulated as follows. Na(+) is not transported, but it plays an essential structural role and its presence is essential for fluoride channel function. In terms of biological role, fluoride-specific ion channel. Important for reducing fluoride concentration in the cell, thus reducing its toxicity. This is Fluoride-specific ion channel FluC 1 from Yersinia pseudotuberculosis serotype I (strain IP32953).